The primary structure comprises 95 residues: Aspartyl/glutamyl-tRNA(Asn/Gln) amidotransferase subunit C (95 aa).

The protein belongs to the GatC family. Heterotrimer of A, B and C subunits.

The enzyme catalyses L-glutamyl-tRNA(Gln) + L-glutamine + ATP + H2O = L-glutaminyl-tRNA(Gln) + L-glutamate + ADP + phosphate + H(+). It catalyses the reaction L-aspartyl-tRNA(Asn) + L-glutamine + ATP + H2O = L-asparaginyl-tRNA(Asn) + L-glutamate + ADP + phosphate + 2 H(+). Functionally, allows the formation of correctly charged Asn-tRNA(Asn) or Gln-tRNA(Gln) through the transamidation of misacylated Asp-tRNA(Asn) or Glu-tRNA(Gln) in organisms which lack either or both of asparaginyl-tRNA or glutaminyl-tRNA synthetases. The reaction takes place in the presence of glutamine and ATP through an activated phospho-Asp-tRNA(Asn) or phospho-Glu-tRNA(Gln). The polypeptide is Aspartyl/glutamyl-tRNA(Asn/Gln) amidotransferase subunit C (Methylobacillus flagellatus (strain ATCC 51484 / DSM 6875 / VKM B-1610 / KT)).